The following is a 161-amino-acid chain: Large ribosomal subunit protein uL15 (161 aa).

Residues 1–43 form a disordered region; the sequence is MKLSDIADNAGSRKKRMRIGRGIGSGKGKTGGRGGKGQTARSG. The segment covering 21 to 37 has biased composition (gly residues); sequence RGIGSGKGKTGGRGGKG.

Belongs to the universal ribosomal protein uL15 family. As to quaternary structure, part of the 50S ribosomal subunit.

Binds to the 23S rRNA. This Nitrobacter hamburgensis (strain DSM 10229 / NCIMB 13809 / X14) protein is Large ribosomal subunit protein uL15.